Here is a 275-residue protein sequence, read N- to C-terminus: NH(3)-dependent NAD(+) synthetase (275 aa).

An ATP-binding site is contributed by 46–53 (GISGGQDS). Position 52 (D52) interacts with Mg(2+). R141 lines the deamido-NAD(+) pocket. T161 is a binding site for ATP. E166 lines the Mg(2+) pocket. K174 and D181 together coordinate deamido-NAD(+). The ATP site is built by K190 and T212. 261–262 (HK) serves as a coordination point for deamido-NAD(+).

The protein belongs to the NAD synthetase family. As to quaternary structure, homodimer.

The enzyme catalyses deamido-NAD(+) + NH4(+) + ATP = AMP + diphosphate + NAD(+) + H(+). It participates in cofactor biosynthesis; NAD(+) biosynthesis; NAD(+) from deamido-NAD(+) (ammonia route): step 1/1. Its function is as follows. Catalyzes the ATP-dependent amidation of deamido-NAD to form NAD. Uses ammonia as a nitrogen source. The sequence is that of NH(3)-dependent NAD(+) synthetase from Limosilactobacillus reuteri (strain DSM 20016) (Lactobacillus reuteri).